The following is a 355-amino-acid chain: Histidinol-phosphate aminotransferase (355 aa).

Lys218 carries the post-translational modification N6-(pyridoxal phosphate)lysine.

The protein belongs to the class-II pyridoxal-phosphate-dependent aminotransferase family. Histidinol-phosphate aminotransferase subfamily. Homodimer. It depends on pyridoxal 5'-phosphate as a cofactor.

It carries out the reaction L-histidinol phosphate + 2-oxoglutarate = 3-(imidazol-4-yl)-2-oxopropyl phosphate + L-glutamate. It participates in amino-acid biosynthesis; L-histidine biosynthesis; L-histidine from 5-phospho-alpha-D-ribose 1-diphosphate: step 7/9. This Pelodictyon phaeoclathratiforme (strain DSM 5477 / BU-1) protein is Histidinol-phosphate aminotransferase.